Reading from the N-terminus, the 334-residue chain is Glycerol-3-phosphate dehydrogenase [NAD(P)+] (334 aa).

3 residues coordinate NADPH: Trp-13, Arg-33, and Lys-106. 3 residues coordinate sn-glycerol 3-phosphate: Lys-106, Gly-137, and Ser-139. An NADPH-binding site is contributed by Ala-141. Sn-glycerol 3-phosphate-binding residues include Lys-192, Asp-245, Ser-255, Arg-256, and Asn-257. Residue Lys-192 is the Proton acceptor of the active site. Arg-256 serves as a coordination point for NADPH. Residues Val-280 and Glu-282 each contribute to the NADPH site.

It belongs to the NAD-dependent glycerol-3-phosphate dehydrogenase family.

The protein localises to the cytoplasm. It catalyses the reaction sn-glycerol 3-phosphate + NAD(+) = dihydroxyacetone phosphate + NADH + H(+). The catalysed reaction is sn-glycerol 3-phosphate + NADP(+) = dihydroxyacetone phosphate + NADPH + H(+). It participates in membrane lipid metabolism; glycerophospholipid metabolism. In terms of biological role, catalyzes the reduction of the glycolytic intermediate dihydroxyacetone phosphate (DHAP) to sn-glycerol 3-phosphate (G3P), the key precursor for phospholipid synthesis. This is Glycerol-3-phosphate dehydrogenase [NAD(P)+] from Chlamydia trachomatis serovar L2 (strain ATCC VR-902B / DSM 19102 / 434/Bu).